A 145-amino-acid polypeptide reads, in one-letter code: Large ribosomal subunit protein uL13 (145 aa).

Belongs to the universal ribosomal protein uL13 family. Part of the 50S ribosomal subunit.

In terms of biological role, this protein is one of the early assembly proteins of the 50S ribosomal subunit, although it is not seen to bind rRNA by itself. It is important during the early stages of 50S assembly. This chain is Large ribosomal subunit protein uL13, found in Staphylococcus carnosus (strain TM300).